An 89-amino-acid polypeptide reads, in one-letter code: Cell division topological specificity factor (89 aa).

This sequence belongs to the MinE family.

Functionally, prevents the cell division inhibition by proteins MinC and MinD at internal division sites while permitting inhibition at polar sites. This ensures cell division at the proper site by restricting the formation of a division septum at the midpoint of the long axis of the cell. This chain is Cell division topological specificity factor, found in Janthinobacterium sp. (strain Marseille) (Minibacterium massiliensis).